The primary structure comprises 184 residues: dCTP deaminase (184 aa).

DCTP-binding positions include 107 to 112, 131 to 133, Q152, Y166, and Q176; these read KSTYAR and TLE. Residue E133 is the Proton donor/acceptor of the active site.

The protein belongs to the dCTP deaminase family. As to quaternary structure, homotrimer.

The catalysed reaction is dCTP + H2O + H(+) = dUTP + NH4(+). It participates in pyrimidine metabolism; dUMP biosynthesis; dUMP from dCTP (dUTP route): step 1/2. Its function is as follows. Catalyzes the deamination of dCTP to dUTP. This Novosphingobium aromaticivorans (strain ATCC 700278 / DSM 12444 / CCUG 56034 / CIP 105152 / NBRC 16084 / F199) protein is dCTP deaminase.